Here is a 253-residue protein sequence, read N- to C-terminus: 5-oxoprolinase subunit A (253 aa).

The protein belongs to the LamB/PxpA family. As to quaternary structure, forms a complex composed of PxpA, PxpB and PxpC.

It catalyses the reaction 5-oxo-L-proline + ATP + 2 H2O = L-glutamate + ADP + phosphate + H(+). In terms of biological role, catalyzes the cleavage of 5-oxoproline to form L-glutamate coupled to the hydrolysis of ATP to ADP and inorganic phosphate. This chain is 5-oxoprolinase subunit A, found in Bacillus anthracis (strain A0248).